The sequence spans 49 residues: uncharacterized protein (49 aa).

This is an uncharacterized protein from Escherichia coli (Bacteriophage T4).